The primary structure comprises 345 residues: tRNA N6-adenosine threonylcarbamoyltransferase (345 aa).

Residues histidine 111 and histidine 115 each coordinate Fe cation. Residues 134–138 (LVSGG), aspartate 167, glycine 180, and asparagine 276 contribute to the substrate site. Residue aspartate 304 participates in Fe cation binding.

This sequence belongs to the KAE1 / TsaD family. Requires Fe(2+) as cofactor.

Its subcellular location is the cytoplasm. It catalyses the reaction L-threonylcarbamoyladenylate + adenosine(37) in tRNA = N(6)-L-threonylcarbamoyladenosine(37) in tRNA + AMP + H(+). Required for the formation of a threonylcarbamoyl group on adenosine at position 37 (t(6)A37) in tRNAs that read codons beginning with adenine. Is involved in the transfer of the threonylcarbamoyl moiety of threonylcarbamoyl-AMP (TC-AMP) to the N6 group of A37, together with TsaE and TsaB. TsaD likely plays a direct catalytic role in this reaction. This Alcanivorax borkumensis (strain ATCC 700651 / DSM 11573 / NCIMB 13689 / SK2) protein is tRNA N6-adenosine threonylcarbamoyltransferase.